Reading from the N-terminus, the 1703-residue chain is Protein TIC 214 (1703 aa).

6 helical membrane passes run 39–61 (YYGF…TFFL), 67–87 (GIIC…SIYC), 90–110 (LYVM…YMFY), 138–158 (LLLD…NPVL), 174–194 (FFLT…INSI), and 220–240 (FSIL…VPLI). Disordered regions lie at residues 615-643 (GPRK…KERE) and 1431-1494 (TKEP…WKSK). Residues 618 to 660 (KGKLEDKEKEKEKAAQTQTEVKKEREKEKEERVIKRFQNQSDF) adopt a coiled-coil conformation. Basic and acidic residues predominate over residues 619-643 (GKLEDKEKEKEKAAQTQTEVKKERE).

Belongs to the TIC214 family. As to quaternary structure, part of the Tic complex.

The protein localises to the plastid. The protein resides in the chloroplast inner membrane. Involved in protein precursor import into chloroplasts. May be part of an intermediate translocation complex acting as a protein-conducting channel at the inner envelope. This Psilotum nudum (Whisk fern) protein is Protein TIC 214.